The following is a 256-amino-acid chain: tRNA pseudouridine synthase A (256 aa).

The Nucleophile role is filled by D52. Substrate is bound at residue Y110.

Belongs to the tRNA pseudouridine synthase TruA family. Homodimer.

The enzyme catalyses uridine(38/39/40) in tRNA = pseudouridine(38/39/40) in tRNA. Its function is as follows. Formation of pseudouridine at positions 38, 39 and 40 in the anticodon stem and loop of transfer RNAs. The polypeptide is tRNA pseudouridine synthase A (Stenotrophomonas maltophilia (strain K279a)).